The chain runs to 152 residues: Nucleoside diphosphate kinase (152 aa).

Lys-11, Phe-59, Arg-87, Thr-93, Arg-104, and Asn-114 together coordinate ATP. His-117 (pros-phosphohistidine intermediate) is an active-site residue.

Belongs to the NDK family. In terms of assembly, homotetramer. Requires Mg(2+) as cofactor.

The protein localises to the cytoplasm. The enzyme catalyses a 2'-deoxyribonucleoside 5'-diphosphate + ATP = a 2'-deoxyribonucleoside 5'-triphosphate + ADP. It catalyses the reaction a ribonucleoside 5'-diphosphate + ATP = a ribonucleoside 5'-triphosphate + ADP. In terms of biological role, major role in the synthesis of nucleoside triphosphates other than ATP. The ATP gamma phosphate is transferred to the NDP beta phosphate via a ping-pong mechanism, using a phosphorylated active-site intermediate. This chain is Nucleoside diphosphate kinase, found in Prochlorococcus marinus (strain MIT 9515).